Consider the following 180-residue polypeptide: CASP-like protein XL3 (180 aa).

Over 1–7 (MELSIQK) the chain is Cytoplasmic. Residues 8–28 (IEALIRLSTIVMLVLTACLIG) form a helical membrane-spanning segment. Residues 29 to 49 (LDSQTKVIFYVQKKASFKDLR) are Extracellular-facing. The helical transmembrane segment at 50–70 (ALVGLLYITSLAAAYNLLQLC) threads the bilayer. The Cytoplasmic segment spans residues 71–98 (CSSFSASYKGTSLQSYAYLAWLRYILDQ). The chain crosses the membrane as a helical span at residues 99–119 (AVVYAVFAGNLAALEHSFLVL). At 120–140 (TGEENFQWLKWCNKYTRFCTQ) the chain is on the extracellular side. A helical membrane pass occupies residues 141 to 161 (IGGSLLCGFVASLLMFSIASI). The Cytoplasmic portion of the chain corresponds to 162–180 (SAFNLFRQYSPTKFMHLKL).

It belongs to the Casparian strip membrane proteins (CASP) family. As to quaternary structure, homodimer and heterodimers.

The protein localises to the cell membrane. In Gossypium hirsutum (Upland cotton), this protein is CASP-like protein XL3 (XL3).